The chain runs to 167 residues: MKRLETIRHMWSVVYDHFDIVNGKECCYVHTHLSNQNLIPSTVKTNLYMKTMGSCIQMDSMEALEYLSELKESGGWSPRPEMQEFEYPDGVEDTESIERLVEEFFNRSELQAGESVKFGNSINVKHTSVSAKQLRTRIRQQLPLYSHLLPTQRVDICSLELIIIHTK.

This sequence belongs to the Schlafen family. Subgroup poxviridae B3 subfamily.

The polypeptide is Schlafen-like protein (Bos taurus (Bovine)).